A 45-amino-acid chain; its full sequence is Parabutoporin (45 aa).

As to quaternary structure, monomer and homodimer. Expressed by the venom gland.

It localises to the secreted. The protein resides in the target cell membrane. At high concentrations, acts as a pore former in cellular membranes and causes the leakage of the cells. At submicromolar concentrations, degranulates granulocytes and has a weak hemolytic activity against human red blood cells. Also strongly inhibits the production of superoxide anions. Has a strong antibacterial activity against Gram-negative bacteria but is less active against Gram-positive bacteria. Also has antifungal activity. Induces reversible G-protein dependent Ca(2+) release from intracellular stores and increase Ca(2+) influx in HL-60 cells. Induces the activation of the Rac pathway in granulocytes. Synergistically enhances the excitatory effects of short and long chain ion-channel-specific neurotoxins by interaction with the neuronal membranes. The sequence is that of Parabutoporin from Parabuthus schlechteri (Scorpion).